A 711-amino-acid chain; its full sequence is Polyribonucleotide nucleotidyltransferase (711 aa).

Mg(2+) is bound by residues D486 and D492. Residues 553-612 form the KH domain; the sequence is PRIHTIKINPDKIKDVIGKGGSVIRALTEETGTTIEIEDDGTVKIAATDGEKAKHAIRRI. The S1 motif domain maps to 622–690; that stretch reads GRVYTGKVTR…RQGRIRLSIK (69 aa). The disordered stretch occupies residues 690–711; the sequence is KEATEQSQPAAAPEAPAAEQGE. Residues 694–711 show a composition bias toward low complexity; the sequence is EQSQPAAAPEAPAAEQGE.

This sequence belongs to the polyribonucleotide nucleotidyltransferase family. In terms of assembly, component of the RNA degradosome, which is a multiprotein complex involved in RNA processing and mRNA degradation. Mg(2+) serves as cofactor.

It localises to the cytoplasm. It carries out the reaction RNA(n+1) + phosphate = RNA(n) + a ribonucleoside 5'-diphosphate. Functionally, involved in mRNA degradation. Catalyzes the phosphorolysis of single-stranded polyribonucleotides processively in the 3'- to 5'-direction. This chain is Polyribonucleotide nucleotidyltransferase, found in Shigella dysenteriae serotype 1 (strain Sd197).